A 272-amino-acid polypeptide reads, in one-letter code: MMACHC-like protein (272 aa).

Residues aspartate 121, 132–135 (ILMQ), and 146–148 (YYQ) contribute to the substrate site.

The protein belongs to the MMACHC family. FAD is required as a cofactor. The cofactor is FMN.

The protein localises to the cytoplasm. In terms of biological role, catalyzes the reductive dealkylation of cyanocobalamin to cob(II)alamin, using FAD or FMN as cofactor and NADPH as cosubstrate. Can also catalyze the glutathione-dependent reductive demethylation of methylcobalamin, and, with much lower efficiency, the glutathione-dependent reductive demethylation of adenosylcobalamin. Under anaerobic conditions cob(I)alamin is the first product; it is highly reactive and is converted to aquocob(II)alamin in the presence of oxygen. Binds cyanocobalamin, adenosylcobalamin, methylcobalamin and other, related vitamin B12 derivatives. This is MMACHC-like protein (cblc-1) from Caenorhabditis elegans.